We begin with the raw amino-acid sequence, 359 residues long: S-adenosylmethionine:tRNA ribosyltransferase-isomerase (359 aa).

It belongs to the QueA family. Monomer.

It localises to the cytoplasm. The catalysed reaction is 7-aminomethyl-7-carbaguanosine(34) in tRNA + S-adenosyl-L-methionine = epoxyqueuosine(34) in tRNA + adenine + L-methionine + 2 H(+). It participates in tRNA modification; tRNA-queuosine biosynthesis. In terms of biological role, transfers and isomerizes the ribose moiety from AdoMet to the 7-aminomethyl group of 7-deazaguanine (preQ1-tRNA) to give epoxyqueuosine (oQ-tRNA). The sequence is that of S-adenosylmethionine:tRNA ribosyltransferase-isomerase from Synechococcus sp. (strain ATCC 27144 / PCC 6301 / SAUG 1402/1) (Anacystis nidulans).